The primary structure comprises 273 residues: 4-hydroxy-tetrahydrodipicolinate reductase (273 aa).

NAD(+) is bound by residues 12–17 (GAGGRM) and E38. R39 contacts NADP(+). NAD(+) is bound by residues 102 to 104 (GTT) and 126 to 129 (AANF). Residue H159 is the Proton donor/acceptor of the active site. H160 is a binding site for (S)-2,3,4,5-tetrahydrodipicolinate. Residue K163 is the Proton donor of the active site. 169–170 (GT) contacts (S)-2,3,4,5-tetrahydrodipicolinate.

The protein belongs to the DapB family. In terms of assembly, homotetramer.

It is found in the cytoplasm. The catalysed reaction is (S)-2,3,4,5-tetrahydrodipicolinate + NAD(+) + H2O = (2S,4S)-4-hydroxy-2,3,4,5-tetrahydrodipicolinate + NADH + H(+). It catalyses the reaction (S)-2,3,4,5-tetrahydrodipicolinate + NADP(+) + H2O = (2S,4S)-4-hydroxy-2,3,4,5-tetrahydrodipicolinate + NADPH + H(+). The protein operates within amino-acid biosynthesis; L-lysine biosynthesis via DAP pathway; (S)-tetrahydrodipicolinate from L-aspartate: step 4/4. Catalyzes the conversion of 4-hydroxy-tetrahydrodipicolinate (HTPA) to tetrahydrodipicolinate. The sequence is that of 4-hydroxy-tetrahydrodipicolinate reductase from Pectobacterium carotovorum subsp. carotovorum (strain PC1).